A 602-amino-acid chain; its full sequence is Elongation factor 4 (602 aa).

In terms of domain architecture, tr-type G spans 2–184; the sequence is KHIRNFSIIA…AIVAKVPAPR (183 aa). Residues 14–19 and 131–134 contribute to the GTP site; these read DHGKST and NKMD.

The protein belongs to the TRAFAC class translation factor GTPase superfamily. Classic translation factor GTPase family. LepA subfamily.

The protein resides in the cell inner membrane. The enzyme catalyses GTP + H2O = GDP + phosphate + H(+). Its function is as follows. Required for accurate and efficient protein synthesis under certain stress conditions. May act as a fidelity factor of the translation reaction, by catalyzing a one-codon backward translocation of tRNAs on improperly translocated ribosomes. Back-translocation proceeds from a post-translocation (POST) complex to a pre-translocation (PRE) complex, thus giving elongation factor G a second chance to translocate the tRNAs correctly. Binds to ribosomes in a GTP-dependent manner. The protein is Elongation factor 4 of Verminephrobacter eiseniae (strain EF01-2).